Consider the following 366-residue polypeptide: Carbamoyl phosphate synthase small chain (366 aa).

A CPSase region spans residues 1 to 171; it reads MKKRKLILED…KPYVVPGRGL (171 aa). L-glutamine-binding residues include S46, G220, and G222. The 188-residue stretch at 172–359 folds into the Glutamine amidotransferase type-1 domain; the sequence is RVVMVDFGAK…LNLIKASKVK (188 aa). The Nucleophile role is filled by C247. Positions 248, 251, 289, and 292 each coordinate L-glutamine. Residues H332 and E334 contribute to the active site.

It belongs to the CarA family. In terms of assembly, composed of two chains; the small (or glutamine) chain promotes the hydrolysis of glutamine to ammonia, which is used by the large (or ammonia) chain to synthesize carbamoyl phosphate. Tetramer of heterodimers (alpha,beta)4.

It catalyses the reaction hydrogencarbonate + L-glutamine + 2 ATP + H2O = carbamoyl phosphate + L-glutamate + 2 ADP + phosphate + 2 H(+). The catalysed reaction is L-glutamine + H2O = L-glutamate + NH4(+). It functions in the pathway amino-acid biosynthesis; L-arginine biosynthesis; carbamoyl phosphate from bicarbonate: step 1/1. The protein operates within pyrimidine metabolism; UMP biosynthesis via de novo pathway; (S)-dihydroorotate from bicarbonate: step 1/3. Its function is as follows. Small subunit of the glutamine-dependent carbamoyl phosphate synthetase (CPSase). CPSase catalyzes the formation of carbamoyl phosphate from the ammonia moiety of glutamine, carbonate, and phosphate donated by ATP, constituting the first step of 2 biosynthetic pathways, one leading to arginine and/or urea and the other to pyrimidine nucleotides. The small subunit (glutamine amidotransferase) binds and cleaves glutamine to supply the large subunit with the substrate ammonia. This Oceanobacillus iheyensis (strain DSM 14371 / CIP 107618 / JCM 11309 / KCTC 3954 / HTE831) protein is Carbamoyl phosphate synthase small chain.